A 220-amino-acid chain; its full sequence is MASATDSRYGQKESSDQNFDYMFKILIIGNSSVGKTSFLFRYADDSFTPAFVSTVGIDFKVKTIYRNDKRIKLQIWDTAGQERYRTITTAYYRGAMGFILMYDITNEESFNAVQDWSTQIKTYSWDNAQVLLVGNKCDMEDERVVSSERGRQLADHLGFEFFEASAKDNINVKQTFERLVDVICEKMSESLDTADPAVTGAKQGPQLTDQQAPPHQDCAC.

Residues S31, S32, V33, G34, K35, T36, S37, T48, P49, S53, and T54 each contribute to the GTP site. T36 contributes to the Mg(2+) binding site. A Switch 1 motif is present at residues 49–58 (PAFVSTVGID). Mg(2+) contacts are provided by T54 and D77. GTP is bound at residue G80. The Switch 2 motif lies at 80-96 (GQERYRTITTAYYRGAM). T86 is subject to Phosphothreonine. Residues N135, K136, D138, A166, and K167 each coordinate GTP. Residues S188 and S190 each carry the phosphoserine modification. The segment at 194 to 220 (ADPAVTGAKQGPQLTDQQAPPHQDCAC) is disordered. Residues C218 and C220 are each lipidated (S-geranylgeranyl cysteine). Residue C220 is modified to Cysteine methyl ester.

Belongs to the small GTPase superfamily. Rab family. Interacts with RIMS1 and RIMS2. Interacts with Rabphilin-3A/RPH3A and Rab effector Noc2/RPH3AL. Interacts with SYTL4. Interacts with RAB3IP. Interacts with SGSM1 and SGSM3. Interacts with SYT1. Interacts with MYH9; this interaction is essential for lysosome exocytosis and plasma membrane repair. Interacts with STXBP1; this interaction promotes RAB3A dissociation from the vesicle membrane. Interacts with SNCA. Interacts with GDI1, GDI2, CHM and CHML; phosphorylation at Thr-86 disrupts these interactions. Interacts with MADD (via uDENN domain); the GTP-bound form is preferred for interaction. It depends on Mg(2+) as a cofactor. Phosphorylation of Thr-86 in the switch II region by LRRK2 prevents the association of RAB regulatory proteins, including CHM, CHML and RAB GDP dissociation inhibitors GDI1 and GDI2.

The protein resides in the cytoplasm. It localises to the cytosol. The protein localises to the lysosome. It is found in the cytoplasmic vesicle. Its subcellular location is the secretory vesicle. The protein resides in the cell projection. It localises to the axon. The protein localises to the cell membrane. It is found in the presynapse. Its subcellular location is the postsynapse. The enzyme catalyses GTP + H2O = GDP + phosphate + H(+). Regulated by guanine nucleotide exchange factors (GEFs) including RAB3IL1 and MADD which promote the exchange of bound GDP for free GTP. Regulated by GTPase activating proteins (GAPs) including RAB3GAP1 and TBC1D10B which increase the GTP hydrolysis activity. Inhibited by GDP dissociation inhibitors (GDIs) which prevent Rab-GDP dissociation. Functionally, the small GTPases Rab are key regulators of intracellular membrane trafficking, from the formation of transport vesicles to their fusion with membranes. Rabs cycle between an inactive GDP-bound form and an active GTP-bound form that is able to recruit to membranes different sets of downstream effectors directly responsible for vesicle formation, movement, tethering and fusion. RAB3A plays a central role in regulated exocytosis and secretion. Controls the recruitment, tethering and docking of secretory vesicles to the plasma membrane. Upon stimulation, switches to its active GTP-bound form, cycles to vesicles and recruits effectors such as RIMS1, RIMS2, Rabphilin-3A/RPH3A, RPH3AL or SYTL4 to help the docking of vesicules onto the plasma membrane. Upon GTP hydrolysis by GTPase-activating protein, dissociates from the vesicle membrane allowing the exocytosis to proceed. Stimulates insulin secretion through interaction with RIMS2 or RPH3AL effectors in pancreatic beta cells. Regulates calcium-dependent lysosome exocytosis and plasma membrane repair (PMR) via the interaction with 2 effectors, SYTL4 and myosin-9/MYH9. Acts as a positive regulator of acrosome content secretion in sperm cells by interacting with RIMS1. Also plays a role in the regulation of dopamine release by interacting with synaptotagmin I/SYT. This is Ras-related protein Rab-3A (RAB3A) from Sus scrofa (Pig).